A 412-amino-acid chain; its full sequence is Acyl-[acyl-carrier-protein] hydrolase FATB3, chloroplastic (412 aa).

The segment covering 1-25 has biased composition (low complexity); that stretch reads MVAAAASSAFFSFPTPGTSPKPGKF. Residues 1–50 constitute a chloroplast transit peptide; sequence MVAAAASSAFFSFPTPGTSPKPGKFGNWPSSLSIPFNPKSNHNGGIQVKA. Residues 1–63 form a disordered region; sequence MVAAAASSAF…AHPKANGSAV (63 aa). Residues 28-44 are compositionally biased toward polar residues; sequence WPSSLSIPFNPKSNHNG. Catalysis depends on residues asparagine 310, histidine 312, and cysteine 347. A disordered region spans residues 393–412; sequence NAGATGAVSTGKTSNGNSVS. Residues 399 to 412 show a composition bias toward polar residues; it reads AVSTGKTSNGNSVS.

This sequence belongs to the acyl-ACP thioesterase family.

Its subcellular location is the plastid. It is found in the chloroplast. The catalysed reaction is tetradecanoyl-[ACP] + H2O = tetradecanoate + holo-[ACP] + H(+). Plays an essential role in chain termination during de novo fatty acid synthesis. Possesses thioesterase activity for medium chain acyl-ACPs. Main substrate is 14:0. The protein is Acyl-[acyl-carrier-protein] hydrolase FATB3, chloroplastic of Cuphea viscosissima (Blue waxweed).